The following is a 371-amino-acid chain: Ligninase LG2 (371 aa).

The signal sequence occupies residues 1–21 (MAFKQLFAAITVALSLTAANA). The propeptide occupies 22 to 28 (AVVKEKR). 4 disulfide bridges follow: Cys-31–Cys-43, Cys-42–Cys-313, Cys-62–Cys-148, and Cys-277–Cys-345. His-75 acts as the Proton acceptor in catalysis. Ca(2+)-binding residues include Asp-76, Gly-94, Asp-96, and Ser-98. A 3-hydroxytryptophan modification is found at Trp-199. His-204 is a binding site for heme b. Residues Ser-205, Asp-222, Thr-224, Ile-227, and Asp-229 each coordinate Ca(2+). N-linked (GlcNAc...) asparagine glycosylation occurs at Asn-285.

It belongs to the peroxidase family. Ligninase subfamily. Requires Ca(2+) as cofactor. Heme b serves as cofactor.

The enzyme catalyses 1-(3,4-dimethoxyphenyl)-2-(2-methoxyphenoxy)propane-1,3-diol + H2O2 = 3,4-dimethoxybenzaldehyde + guaiacol + glycolaldehyde + H2O. It catalyses the reaction 2 (3,4-dimethoxyphenyl)methanol + H2O2 = 2 (3,4-dimethoxyphenyl)methanol radical + 2 H2O. It functions in the pathway secondary metabolite metabolism; lignin degradation. Functionally, depolymerization of lignin. Catalyzes the C(alpha)-C(beta) cleavage of the propyl side chains of lignin. This chain is Ligninase LG2 (GLG2), found in Phanerodontia chrysosporium (White-rot fungus).